A 232-amino-acid chain; its full sequence is tRNA1(Val) (adenine(37)-N6)-methyltransferase (232 aa).

It belongs to the methyltransferase superfamily. tRNA (adenine-N(6)-)-methyltransferase family.

It is found in the cytoplasm. It carries out the reaction adenosine(37) in tRNA1(Val) + S-adenosyl-L-methionine = N(6)-methyladenosine(37) in tRNA1(Val) + S-adenosyl-L-homocysteine + H(+). Specifically methylates the adenine in position 37 of tRNA(1)(Val) (anticodon cmo5UAC). The protein is tRNA1(Val) (adenine(37)-N6)-methyltransferase of Haemophilus influenzae (strain PittEE).